Here is a 189-residue protein sequence, read N- to C-terminus: NADH-ubiquinone oxidoreductase 20.9 kDa subunit (189 aa).

A helical transmembrane segment spans residues 73 to 88 (AMRLATAVGFFGGFLY).

As to quaternary structure, complex I is composed of about 40 different subunits. Post-translationally, the N-terminus is blocked.

It localises to the mitochondrion inner membrane. The enzyme catalyses a ubiquinone + NADH + 5 H(+)(in) = a ubiquinol + NAD(+) + 4 H(+)(out). Its function is as follows. Transfer of electrons from NADH to the respiratory chain. The immediate electron acceptor for the enzyme is believed to be ubiquinone. This chain is NADH-ubiquinone oxidoreductase 20.9 kDa subunit (nuo20.9), found in Neurospora crassa (strain ATCC 24698 / 74-OR23-1A / CBS 708.71 / DSM 1257 / FGSC 987).